A 93-amino-acid chain; its full sequence is Ribonuclease P protein component 4 (93 aa).

The Zn(2+) site is built by cysteine 55, cysteine 58, cysteine 81, and cysteine 83.

The protein belongs to the eukaryotic/archaeal RNase P protein component 4 family. In terms of assembly, consists of a catalytic RNA component and at least 4-5 protein subunits. Zn(2+) serves as cofactor.

The protein localises to the cytoplasm. The enzyme catalyses Endonucleolytic cleavage of RNA, removing 5'-extranucleotides from tRNA precursor.. In terms of biological role, part of ribonuclease P, a protein complex that generates mature tRNA molecules by cleaving their 5'-ends. This Halobacterium salinarum (strain ATCC 29341 / DSM 671 / R1) protein is Ribonuclease P protein component 4.